A 365-amino-acid polypeptide reads, in one-letter code: Succinyl-diaminopimelate desuccinylase (365 aa).

H64 contacts Zn(2+). The active site involves D66. Residue D95 participates in Zn(2+) binding. Residue E125 is the Proton acceptor of the active site. Residues E126, E154, and H339 each contribute to the Zn(2+) site.

Belongs to the peptidase M20A family. DapE subfamily. In terms of assembly, homodimer. Requires Zn(2+) as cofactor. It depends on Co(2+) as a cofactor.

The catalysed reaction is N-succinyl-(2S,6S)-2,6-diaminopimelate + H2O = (2S,6S)-2,6-diaminopimelate + succinate. It participates in amino-acid biosynthesis; L-lysine biosynthesis via DAP pathway; LL-2,6-diaminopimelate from (S)-tetrahydrodipicolinate (succinylase route): step 3/3. Its function is as follows. Catalyzes the hydrolysis of N-succinyl-L,L-diaminopimelic acid (SDAP), forming succinate and LL-2,6-diaminopimelate (DAP), an intermediate involved in the bacterial biosynthesis of lysine and meso-diaminopimelic acid, an essential component of bacterial cell walls. This chain is Succinyl-diaminopimelate desuccinylase, found in Campylobacter curvus (strain 525.92).